We begin with the raw amino-acid sequence, 317 residues long: U5 small nuclear ribonucleoprotein TSSC4 (317 aa).

Positions 1 to 19 (MAETEAGLEVEEPTEDDTL) are enriched in acidic residues. The tract at residues 1–78 (MAETEAGLEV…IPTTAVQPFH (78 aa)) is disordered. The span at 20–37 (PSDTVSLSDSDSDLSLPS) shows a compositional bias: low complexity. A phosphoserine mark is found at serine 57, serine 64, serine 83, and serine 92. The hom2; mediates interaction with the U5 snRNP complexes and required for spliceosomal tri-snRNP complex assembly stretch occupies residues 74-101 (VQPFHLRGMSSTFSQRSHSIFDCLESAA). Residues 123-151 (VAPPSQTPARSLSRVHGNTDPTRVHPVPD) form a disordered region. Positions 146–300 (VHPVPDYVSH…SKKRSRDHFR (155 aa)) are interaction with SNRNP200. The hom3; mediates interaction with the U5 snRNP complexes stretch occupies residues 147–183 (HPVPDYVSHPERWTKYSLEDVSETSEQSNRDAALAFL). Residues 198-238 (FNQDPSSCGEGRVVFTKPVRGSEARAERKRVLKKGVVSGAG) are hom4; necessary for interaction with the PRPF19 complex and required for spliceosomal tri-snRNP complex assembly. N6-acetyllysine is present on lysine 214. The tract at residues 247–317 (HLAGPEAEEW…GPGSERGPSV (71 aa)) is disordered.

This sequence belongs to the TSSC4 family. Interacts in a RNA-independent manner with distinct U5 snRNP-containing complexes, the mono-U5 snRNP and the post-splicing U5 snRNP-PRPF19 complex. Interacts with SNRNP200; the interaction is direct, excludes recruitment of C9ORF78 and WBP4 to SNRNP200 and negatively regulates its RNA helicase activity. Interacts with PRPF8; the interaction is direct.

It localises to the nucleus. The protein localises to the cytoplasm. Its function is as follows. Protein associated with the U5 snRNP, during its maturation and its post-splicing recycling and which is required for spliceosomal tri-snRNP complex assembly in the nucleus. Has a molecular sequestering activity and transiently hinders SNRNP200 binding sites for constitutive splicing factors that intervene later during the assembly of the spliceosome and splicing. Together with its molecular sequestering activity, may also function as a molecular adapter and placeholder, coordinating the assembly of the U5 snRNP and its association with the U4/U6 di-snRNP. The protein is U5 small nuclear ribonucleoprotein TSSC4 of Rattus norvegicus (Rat).